Consider the following 310-residue polypeptide: L-lactate dehydrogenase (310 aa).

Residues V17, D38, K43, Y69, and 83–84 each bind NAD(+); that span reads GA. 2 residues coordinate substrate: Q86 and R92. NAD(+) is bound by residues S105, 122–124, and S147; that span reads ATN. Position 124–127 (124–127) interacts with substrate; it reads NPVD. Position 152 to 155 (152 to 155) interacts with substrate; that stretch reads DTAR. Beta-D-fructose 1,6-bisphosphate is bound by residues R157 and H172. H179 (proton acceptor) is an active-site residue. At Y218 the chain carries Phosphotyrosine. T227 lines the substrate pocket.

The protein belongs to the LDH/MDH superfamily. LDH family. In terms of assembly, homotetramer.

The protein resides in the cytoplasm. It catalyses the reaction (S)-lactate + NAD(+) = pyruvate + NADH + H(+). It participates in fermentation; pyruvate fermentation to lactate; (S)-lactate from pyruvate: step 1/1. Its activity is regulated as follows. Allosterically activated by fructose 1,6-bisphosphate (FBP). In terms of biological role, catalyzes the conversion of lactate to pyruvate. The sequence is that of L-lactate dehydrogenase from Halalkalibacterium halodurans (strain ATCC BAA-125 / DSM 18197 / FERM 7344 / JCM 9153 / C-125) (Bacillus halodurans).